We begin with the raw amino-acid sequence, 299 residues long: Methionyl-tRNA formyltransferase (299 aa).

Residue serine 109 to proline 112 coordinates (6S)-5,6,7,8-tetrahydrofolate.

This sequence belongs to the Fmt family.

It catalyses the reaction L-methionyl-tRNA(fMet) + (6R)-10-formyltetrahydrofolate = N-formyl-L-methionyl-tRNA(fMet) + (6S)-5,6,7,8-tetrahydrofolate + H(+). Attaches a formyl group to the free amino group of methionyl-tRNA(fMet). The formyl group appears to play a dual role in the initiator identity of N-formylmethionyl-tRNA by promoting its recognition by IF2 and preventing the misappropriation of this tRNA by the elongation apparatus. The sequence is that of Methionyl-tRNA formyltransferase from Wolbachia sp. subsp. Drosophila simulans (strain wRi).